A 363-amino-acid chain; its full sequence is tRNA/tmRNA (uracil-C(5))-methyltransferase (363 aa).

S-adenosyl-L-methionine contacts are provided by glutamine 187, tyrosine 215, asparagine 220, glutamate 236, and aspartate 296. Catalysis depends on cysteine 321, which acts as the Nucleophile. Glutamate 355 (proton acceptor) is an active-site residue.

It belongs to the class I-like SAM-binding methyltransferase superfamily. RNA M5U methyltransferase family. TrmA subfamily.

The catalysed reaction is uridine(54) in tRNA + S-adenosyl-L-methionine = 5-methyluridine(54) in tRNA + S-adenosyl-L-homocysteine + H(+). The enzyme catalyses uridine(341) in tmRNA + S-adenosyl-L-methionine = 5-methyluridine(341) in tmRNA + S-adenosyl-L-homocysteine + H(+). Its function is as follows. Dual-specificity methyltransferase that catalyzes the formation of 5-methyluridine at position 54 (m5U54) in all tRNAs, and that of position 341 (m5U341) in tmRNA (transfer-mRNA). This is tRNA/tmRNA (uracil-C(5))-methyltransferase from Pseudomonas aeruginosa (strain UCBPP-PA14).